A 296-amino-acid polypeptide reads, in one-letter code: tRNA dimethylallyltransferase (296 aa).

Residue 2 to 9 (GPTASGKT) coordinates ATP. 4-9 (TASGKT) contributes to the substrate binding site. 3 interaction with substrate tRNA regions span residues 27 to 30 (DSAL), 151 to 155 (QRLSR), and 232 to 237 (RCVGYR).

It belongs to the IPP transferase family. Monomer. It depends on Mg(2+) as a cofactor.

The catalysed reaction is adenosine(37) in tRNA + dimethylallyl diphosphate = N(6)-dimethylallyladenosine(37) in tRNA + diphosphate. Its function is as follows. Catalyzes the transfer of a dimethylallyl group onto the adenine at position 37 in tRNAs that read codons beginning with uridine, leading to the formation of N6-(dimethylallyl)adenosine (i(6)A). In Shewanella baltica (strain OS155 / ATCC BAA-1091), this protein is tRNA dimethylallyltransferase.